A 956-amino-acid chain; its full sequence is Plasma membrane ATPase 1 (956 aa).

Topologically, residues Met-1–Phe-65 are cytoplasmic. A helical membrane pass occupies residues Leu-66 to Ile-85. Topologically, residues Ala-86–Trp-97 are extracellular. A helical transmembrane segment spans residues Gln-98–Glu-118. Residues Asn-119–Ile-247 are Cytoplasmic-facing. Residues Gly-248–Pro-268 traverse the membrane as a helical segment. Over Ile-269–Gly-277 the chain is Extracellular. Residues Ile-278–Thr-295 traverse the membrane as a helical segment. The Cytoplasmic segment spans residues Val-296 to Met-646. Residue Asp-333 is the 4-aspartylphosphate intermediate of the active site. The Mg(2+) site is built by Asp-592 and Asp-596. The helical transmembrane segment at Lys-647–Leu-666 threads the bilayer. The Extracellular portion of the chain corresponds to Leu-667 to Asp-674. Residues Phe-675–Asp-697 form a helical membrane-spanning segment. Residues Arg-698–Ile-713 are Cytoplasmic-facing. A helical membrane pass occupies residues Phe-714–Ala-734. Over Ala-735–Arg-759 the chain is Extracellular. The chain crosses the membrane as a helical span at residues Lys-760–Thr-780. Topologically, residues Arg-781–Gly-792 are cytoplasmic. The helical transmembrane segment at Leu-793–Ala-813 threads the bilayer. The Extracellular portion of the chain corresponds to Asn-814–Glu-821. The helical transmembrane segment at Gly-822–Leu-842 threads the bilayer. Residues Asp-843–Val-956 are Cytoplasmic-facing.

The protein belongs to the cation transport ATPase (P-type) (TC 3.A.3) family. Type IIIA subfamily. As to quaternary structure, possibly exists as a homodimer or a homotrimer.

It is found in the cell membrane. The enzyme catalyses ATP + H2O + H(+)(in) = ADP + phosphate + 2 H(+)(out). In terms of biological role, the plasma membrane ATPase of plants and fungi is a hydrogen ion pump. The proton gradient it generates drives the active transport of nutrients by H(+)-symport. The resulting external acidification and/or internal alkinization may mediate growth responses. The protein is Plasma membrane ATPase 1 (LHA1) of Solanum lycopersicum (Tomato).